The chain runs to 384 residues: Galactokinase (384 aa).

34-37 (EHTD) provides a ligand contact to substrate. An ATP-binding site is contributed by 123 to 129 (SSGLSSS). Ser-129 and Glu-161 together coordinate Mg(2+). Asp-173 functions as the Proton acceptor in the catalytic mechanism. Residue Tyr-222 participates in substrate binding.

The protein belongs to the GHMP kinase family. GalK subfamily.

The protein localises to the cytoplasm. The enzyme catalyses alpha-D-galactose + ATP = alpha-D-galactose 1-phosphate + ADP + H(+). It participates in carbohydrate metabolism; galactose metabolism. In terms of biological role, catalyzes the transfer of the gamma-phosphate of ATP to D-galactose to form alpha-D-galactose-1-phosphate (Gal-1-P). This is Galactokinase from Haemophilus influenzae (strain PittEE).